The primary structure comprises 954 residues: Regulatory protein FlaEY (954 aa).

In terms of biological role, functions in trans to modulate the level of transcription of the flagellin genes and several genes encoding chemotaxis functions. It is itself temporally controlled. The chain is Regulatory protein FlaEY (flaEY) from Caulobacter vibrioides (strain ATCC 19089 / CIP 103742 / CB 15) (Caulobacter crescentus).